Reading from the N-terminus, the 404-residue chain is NADH-quinone oxidoreductase subunit D 2 (404 aa).

It belongs to the complex I 49 kDa subunit family. As to quaternary structure, NDH-1 is composed of 14 different subunits. Subunits NuoB, C, D, E, F, and G constitute the peripheral sector of the complex.

It localises to the cell inner membrane. It carries out the reaction a quinone + NADH + 5 H(+)(in) = a quinol + NAD(+) + 4 H(+)(out). In terms of biological role, NDH-1 shuttles electrons from NADH, via FMN and iron-sulfur (Fe-S) centers, to quinones in the respiratory chain. The immediate electron acceptor for the enzyme in this species is believed to be ubiquinone. Couples the redox reaction to proton translocation (for every two electrons transferred, four hydrogen ions are translocated across the cytoplasmic membrane), and thus conserves the redox energy in a proton gradient. The protein is NADH-quinone oxidoreductase subunit D 2 of Rhizobium etli (strain ATCC 51251 / DSM 11541 / JCM 21823 / NBRC 15573 / CFN 42).